Here is a 335-residue protein sequence, read N- to C-terminus: Ethanol acetyltransferase 1 (335 aa).

In terms of domain architecture, AB hydrolase-1 spans 48-300 (PIVFVHGIFG…NSAHDILDQR (253 aa)). Active-site charge relay system residues include serine 121, aspartate 145, and histidine 294.

This sequence belongs to the AB hydrolase superfamily.

The protein resides in the mitochondrion. The catalysed reaction is ethanol + acetyl-CoA = ethyl acetate + CoA. It carries out the reaction acetyl-CoA + H2O = acetate + CoA + H(+). It catalyses the reaction ethyl acetate + H2O = ethanol + acetate + H(+). In terms of biological role, alcohol acetyltransferase that catalyzes the synthesis of ethyl acetate from ethanol and acetyl-CoA. Can also function as a thioesterase by hydrolyzing acetyl-CoA in the absence of ethanol, as well as esterase hydrolyzing ethyl acetate. This chain is Ethanol acetyltransferase 1 (EAT1), found in Cyberlindnera fabianii (Yeast).